Here is a 650-residue protein sequence, read N- to C-terminus: Chaperone protein DnaK (650 aa).

The residue at position 200 (T200) is a Phosphothreonine; by autocatalysis.

The protein belongs to the heat shock protein 70 family.

In terms of biological role, acts as a chaperone. This is Chaperone protein DnaK from Paraburkholderia phytofirmans (strain DSM 17436 / LMG 22146 / PsJN) (Burkholderia phytofirmans).